We begin with the raw amino-acid sequence, 78 residues long: uncharacterized protein (78 aa).

A helical transmembrane segment spans residues 13–33 (STILILLMSVLILLLSIDILA).

The protein resides in the membrane. This is an uncharacterized protein from Methanocaldococcus jannaschii (strain ATCC 43067 / DSM 2661 / JAL-1 / JCM 10045 / NBRC 100440) (Methanococcus jannaschii).